Consider the following 248-residue polypeptide: 3-deoxy-manno-octulosonate cytidylyltransferase (248 aa).

It belongs to the KdsB family.

It localises to the cytoplasm. The enzyme catalyses 3-deoxy-alpha-D-manno-oct-2-ulosonate + CTP = CMP-3-deoxy-beta-D-manno-octulosonate + diphosphate. It participates in nucleotide-sugar biosynthesis; CMP-3-deoxy-D-manno-octulosonate biosynthesis; CMP-3-deoxy-D-manno-octulosonate from 3-deoxy-D-manno-octulosonate and CTP: step 1/1. Its pathway is bacterial outer membrane biogenesis; lipopolysaccharide biosynthesis. Functionally, activates KDO (a required 8-carbon sugar) for incorporation into bacterial lipopolysaccharide in Gram-negative bacteria. The chain is 3-deoxy-manno-octulosonate cytidylyltransferase from Chlorobaculum tepidum (strain ATCC 49652 / DSM 12025 / NBRC 103806 / TLS) (Chlorobium tepidum).